Reading from the N-terminus, the 347-residue chain is MTGIWDVRITDTSLRDGSHHKRHQFIKEEVGAIVAALDAAGVPVIEVTHGDGLGGSSFNYGFSKTPEQELIKLAAQTAKEAKIAFLMLPGVGTKEDIKEAQDNGGSICRIATHCTEADVSIQHFGLARELGLETVGFLMMAHTIAPEKLAAQARIMADAGCQCVYVVDSAGALVLDGVADRVAALVAELGEDAQVGFHGHENLGLGVANSVEAVRAGAKQIDGSVRRFGAGAGNAPVEALIGVFDKIGVKTGIDFFDIADAAEDVVRPAMPAECLLDRNALIMGYSGVYSSFLKHAVRQSERYGVPAHQLLHRAGQRKLIGGQEDQLIDIALEIKREQESGQVASRR.

Positions 7–259 (VRITDTSLRD…KTGIDFFDIA (253 aa)) constitute a Pyruvate carboxyltransferase domain. A substrate-binding site is contributed by 15 to 16 (RD). Aspartate 16 provides a ligand contact to Mn(2+). Histidine 19 acts as the Proton acceptor in catalysis. Positions 169 and 198 each coordinate substrate. 2 residues coordinate Mn(2+): histidine 198 and histidine 200. Tyrosine 289 is a substrate binding site.

It belongs to the 4-hydroxy-2-oxovalerate aldolase family.

The enzyme catalyses (S)-4-hydroxy-2-oxopentanoate = acetaldehyde + pyruvate. The polypeptide is 4-hydroxy-2-oxovalerate aldolase 2 (Mycobacterium marinum (strain ATCC BAA-535 / M)).